Consider the following 225-residue polypeptide: PKHD-type hydroxylase YbiX (225 aa).

One can recognise a Fe2OG dioxygenase domain in the interval 78-177 (TLSTPLFNRY…RVASFMWIQS (100 aa)). Fe cation contacts are provided by His-96, Asp-98, and His-158. Residue Arg-168 participates in 2-oxoglutarate binding.

It depends on Fe(2+) as a cofactor. Requires L-ascorbate as cofactor.

This Shigella sonnei (strain Ss046) protein is PKHD-type hydroxylase YbiX.